The sequence spans 213 residues: Proton-translocating ferredoxin:NAD(+) oxidoreductase complex subunit E (213 aa).

6 helical membrane-spanning segments follow: residues Gly-11–Thr-31, Phe-39–Ile-59, Val-69–Ala-89, Leu-93–Ala-113, Phe-128–Ile-148, and Ala-170–Val-190.

It belongs to the NqrDE/RnfAE family. As to quaternary structure, the complex is composed of six subunits: RnfA, RnfB, RnfC, RnfD, RnfE and RnfG.

Its subcellular location is the cell membrane. Its function is as follows. Part of a membrane-bound complex that couples electron transfer with translocation of ions across the membrane. Couples electron transfer from reduced ferredoxin to NAD(+) with translocation of H(+) out of the cell. Essential for energy conservation during autotrophic growth. Contributes to ATP synthesis during heterotrophic growth. This is Proton-translocating ferredoxin:NAD(+) oxidoreductase complex subunit E from Clostridium ljungdahlii (strain ATCC 55383 / DSM 13528 / PETC).